The following is a 606-amino-acid chain: Gamma-aminobutyric acid receptor subunit beta (606 aa).

The N-terminal stretch at 1–44 (MSDSKMDKLARMAPLPRTPLLTIWLAINMALIAQETGHKRIHTV) is a signal peptide. Residues 45–268 (QAATGGGSML…CEIQFVRSMG (224 aa)) are Extracellular-facing. N-linked (GlcNAc...) asparagine glycosylation occurs at Asn58. Cys185 and Cys199 are disulfide-bonded. Asn253 carries an N-linked (GlcNAc...) asparagine glycan. 3 consecutive transmembrane segments (helical) span residues 269 to 291 (YYLI…SFWL), 297 to 316 (PARV…LMSS), and 333 to 356 (YLGT…YMAK). At 357–568 (RIQMRKQRFM…LGITPSDIDK (212 aa)) the chain is on the cytoplasmic side. Disordered stretches follow at residues 376-451 (KQQL…VSNR) and 482-542 (HDPK…AAVP). The span at 381 to 395 (GANQQQANPNPNANV) shows a compositional bias: low complexity. The segment covering 396–425 (GGPGGVGVGPGGPGGPGGGVNVGVGMGMGP) has biased composition (gly residues). Over residues 430–443 (GHGHHAHSHGHPHA) the composition is skewed to basic residues. Residues 499-536 (GGRGGPQSHGPGPGQGGGPPGGGGGGGGGGGPPEGGGD) show a composition bias toward gly residues. Residues 569–590 (YSRIVFPVCFVCFNLMYWIIYL) traverse the membrane as a helical segment.

Belongs to the ligand-gated ion channel (TC 1.A.9) family. Gamma-aminobutyric acid receptor (TC 1.A.9.5) subfamily.

The protein resides in the postsynaptic cell membrane. It localises to the cell membrane. Its function is as follows. GABA, an inhibitory neurotransmitter, mediates neuronal inhibition by binding to the GABA receptor and opening an integral chloride channel. The sequence is that of Gamma-aminobutyric acid receptor subunit beta (Rdl) from Drosophila simulans (Fruit fly).